Here is a 178-residue protein sequence, read N- to C-terminus: Gamma-crystallin S (178 aa).

An N-acetylserine modification is found at serine 2. The interval 2-5 is N-terminal arm; sequence SKTG. Beta/gamma crystallin 'Greek key' domains lie at 6–44 and 45–87; these read AKISFYEDRNFQGRRYDCDCDCVDFRSYLSRCNSIRVEG and GTWA…RAVH. Residues 88–93 are connecting peptide; that stretch reads LSSGGQ. Beta/gamma crystallin 'Greek key' domains are found at residues 94-134 and 135-177; these read YKIQ…KVLE and GTWI…RRIV.

The protein belongs to the beta/gamma-crystallin family. In terms of assembly, monomer.

Crystallins are the dominant structural components of the vertebrate eye lens. The sequence is that of Gamma-crystallin S (Crygs) from Rattus norvegicus (Rat).